The chain runs to 61 residues: MFTLKKTLLLLFFLGTINLSLCEEERNAEEERRDGDDEMDVEVKKRFITGLIGGLMKALGK.

A signal peptide spans 1 to 22 (MFTLKKTLLLLFFLGTINLSLC). Positions 23 to 44 (EEERNAEEERRDGDDEMDVEVK) are cleaved as a propeptide — removed in mature form. A Lysine amide modification is found at Lys61.

Belongs to the frog skin active peptide (FSAP) family. Temporin subfamily. In terms of tissue distribution, expressed by the skin glands.

Its subcellular location is the secreted. Functionally, antimicrobial peptide. Active against some Gram-positive and Gram-negative bacterial strains. Active against fungus C.glabrata 090902 but not against C.albicans ATCC 12231. Shows very weak hemolytic activity against human erythrocytes. The protein is Temporin-SN2 of Sylvirana spinulosa (Fine-spined frog).